The sequence spans 354 residues: Divinyl chlorophyll a/b light-harvesting protein PcbF (354 aa).

A run of 6 helical transmembrane segments spans residues 27-47 (FIAS…SNTL), 88-108 (VVTL…GGLL), 140-160 (FILG…VEWA), 201-221 (VMGG…FHAI), 248-268 (AILS…AFWC), and 315-335 (TANF…WHAL).

This sequence belongs to the PsbB/PsbC family. IsiA/Pcb subfamily. In terms of assembly, the antenna complex consists of divinyl chlorophylls (a and b) and divinyl chlorophyll a/b binding proteins and binds more divinyl chlorophyll b than does the antenna complex from high-light-adapted Prochlorococcus. Divinyl chlorophyll a is required as a cofactor. Requires divinyl chlorophyll b as cofactor.

The protein resides in the cellular thylakoid membrane. Functionally, the antenna complex functions as a light receptor, it captures and delivers excitation energy to photosystems II and I. The Prochlorales pcb genes are not related to higher plant LHCs. This chain is Divinyl chlorophyll a/b light-harvesting protein PcbF (pcbF), found in Prochlorococcus marinus (strain SARG / CCMP1375 / SS120).